Here is a 428-residue protein sequence, read N- to C-terminus: C4-dicarboxylate transport protein (428 aa).

9 consecutive transmembrane segments (helical) span residues 4–24 (SLFK…ILLG), 44–64 (LIKM…IAGM), 76–96 (VALL…LIIV), 142–162 (IGAF…LFGF), 184–204 (VIFG…FGAM), 222–242 (LIIC…GTIA), 289–309 (VVGL…SIYL), 326–346 (IFHQ…AAGV), and 352–372 (IVLA…LALI).

This sequence belongs to the dicarboxylate/amino acid:cation symporter (DAACS) (TC 2.A.23) family.

The protein resides in the cell inner membrane. In terms of biological role, responsible for the transport of dicarboxylates such as succinate, fumarate, and malate from the periplasm across the membrane. The sequence is that of C4-dicarboxylate transport protein from Salmonella arizonae (strain ATCC BAA-731 / CDC346-86 / RSK2980).